The following is a 651-amino-acid chain: Acid beta-fructofuranosidase (651 aa).

At 1-23 (MEHHKPLLPTSSHAAPNPRTRKD) the chain is on the cytoplasmic side. Positions 1-103 (MEHHKPLLPT…LFSGEGGASE (103 aa)) are cleaved as a propeptide — removed in mature form. Residues 24–44 (LLLLLCALLFLSSLVAFGRNR) traverse the membrane as a helical; Signal-anchor for type II membrane protein segment. Residues 45-651 (ASNVPHDHVS…PFPFNPDQKN (607 aa)) lie on the Lumenal side of the membrane. Residues 48–76 (VPHDHVSSSASNHQQEHQSPTSLPSSKWH) form a disordered region. The segment covering 54–72 (SSSASNHQQEHQSPTSLPS) has biased composition (polar residues). Substrate-binding positions include 127 to 130 (WMND), Gln146, Trp154, and 189 to 190 (WT). The active site involves Asp130. N-linked (GlcNAc...) asparagine glycosylation occurs at Asn210. Position 253-254 (253-254 (RD)) interacts with substrate. An N-linked (GlcNAc...) asparagine glycan is attached at Asn275. Substrate contacts are provided by Glu308 and Asp343. Cys500 and Cys548 are oxidised to a cystine. The N-linked (GlcNAc...) asparagine glycan is linked to Asn620.

This sequence belongs to the glycosyl hydrolase 32 family. May be present in two forms, a 70 kDa monomer and a heterodimer of the 30 kDa and 38 kDa subunits. The ratio of the levels of the two forms within cells appears to be regulated developmentally.

It is found in the membrane. The protein resides in the vacuole lumen. The catalysed reaction is Hydrolysis of terminal non-reducing beta-D-fructofuranoside residues in beta-D-fructofuranosides.. Its pathway is glycan biosynthesis; sucrose metabolism. The sequence is that of Acid beta-fructofuranosidase from Phaseolus vulgaris (Kidney bean).